Consider the following 1161-residue polypeptide: Nuclear pore complex-interacting protein family member B11 (1161 aa).

A helical transmembrane segment spans residues 63-87 (IIIAFPTSYKVVITLWIVYLWVSLL). Disordered stretches follow at residues 278 to 580 (ADDN…DDNI) and 892 to 1161 (SADD…RRLS). The segment covering 311–321 (PLPPSAPPSAP) has biased composition (pro residues). Composition is skewed to basic and acidic residues over residues 368-378 (DNIKTTAERLR), 410-420 (DNIKTPAEHLR), 452-462 (DNIKTPAERLR), 494-504 (DNIKTPAEHLR), 536-546 (DNIKTTAEHLR), 918-928 (DNIKTPAERLR), 960-970 (DNIKTPAERLR), 1002-1012 (DNIKTPAERLR), and 1044-1054 (DNIKTPAERLR).

The protein belongs to the NPIP family.

The protein resides in the membrane. This is Nuclear pore complex-interacting protein family member B11 (NPIPB11) from Homo sapiens (Human).